Consider the following 285-residue polypeptide: NAD kinase (285 aa).

The active-site Proton acceptor is the Asp-67. Residues 67-68, 141-142, Arg-152, Lys-169, Asp-171, 182-187, and Gln-242 each bind NAD(+); these read DG, ND, and TGYSLS.

The protein belongs to the NAD kinase family. Requires a divalent metal cation as cofactor.

The protein localises to the cytoplasm. It catalyses the reaction NAD(+) + ATP = ADP + NADP(+) + H(+). Involved in the regulation of the intracellular balance of NAD and NADP, and is a key enzyme in the biosynthesis of NADP. Catalyzes specifically the phosphorylation on 2'-hydroxyl of the adenosine moiety of NAD to yield NADP. This chain is NAD kinase, found in Trichlorobacter lovleyi (strain ATCC BAA-1151 / DSM 17278 / SZ) (Geobacter lovleyi).